We begin with the raw amino-acid sequence, 41 residues long: Large ribosomal subunit protein bL36 (41 aa).

This sequence belongs to the bacterial ribosomal protein bL36 family.

The protein is Large ribosomal subunit protein bL36 of Neisseria gonorrhoeae (strain ATCC 700825 / FA 1090).